The chain runs to 396 residues: Elongation factor Tu 2 (396 aa).

The region spanning 10–206 is the tr-type G domain; the sequence is KPHCNIGTIG…AVDAYIPQPE (197 aa). Residues 19 to 26 form a G1 region; it reads GHVDHGKT. GTP is bound at residue 19-26; the sequence is GHVDHGKT. Thr26 is a binding site for Mg(2+). Positions 60–64 are G2; the sequence is GITIS. Residues 81–84 form a G3 region; that stretch reads DCPG. GTP is bound by residues 81-85 and 136-139; these read DCPGH and NKCD. Residues 136–139 form a G4 region; that stretch reads NKCD. Positions 174–176 are G5; sequence SAL.

The protein belongs to the TRAFAC class translation factor GTPase superfamily. Classic translation factor GTPase family. EF-Tu/EF-1A subfamily. As to quaternary structure, monomer.

It localises to the cytoplasm. The enzyme catalyses GTP + H2O = GDP + phosphate + H(+). Its function is as follows. GTP hydrolase that promotes the GTP-dependent binding of aminoacyl-tRNA to the A-site of ribosomes during protein biosynthesis. The polypeptide is Elongation factor Tu 2 (Rhodopseudomonas palustris (strain BisB5)).